The primary structure comprises 77 residues: Small ribosomal subunit protein uS17c (77 aa).

Belongs to the universal ribosomal protein uS17 family. Part of the 30S ribosomal subunit.

It localises to the plastid. The protein localises to the chloroplast. Its function is as follows. One of the primary rRNA binding proteins, it binds specifically to the 5'-end of 16S ribosomal RNA. The polypeptide is Small ribosomal subunit protein uS17c (rps17) (Cyanidium caldarium (Red alga)).